The sequence spans 473 residues: 3-isopropylmalate dehydratase large subunit (473 aa).

Residues Cys355, Cys415, and Cys418 each contribute to the [4Fe-4S] cluster site. The tract at residues Pro423–Leu452 is disordered.

The protein belongs to the aconitase/IPM isomerase family. LeuC type 1 subfamily. In terms of assembly, heterodimer of LeuC and LeuD. [4Fe-4S] cluster serves as cofactor.

The enzyme catalyses (2R,3S)-3-isopropylmalate = (2S)-2-isopropylmalate. It participates in amino-acid biosynthesis; L-leucine biosynthesis; L-leucine from 3-methyl-2-oxobutanoate: step 2/4. Functionally, catalyzes the isomerization between 2-isopropylmalate and 3-isopropylmalate, via the formation of 2-isopropylmaleate. This chain is 3-isopropylmalate dehydratase large subunit, found in Corynebacterium jeikeium (strain K411).